Consider the following 64-residue polypeptide: Large ribosomal subunit protein bL35 (64 aa).

Belongs to the bacterial ribosomal protein bL35 family.

The sequence is that of Large ribosomal subunit protein bL35 from Shewanella frigidimarina (strain NCIMB 400).